Consider the following 283-residue polypeptide: Putative aquaporin NIP4-1 (283 aa).

Met1 bears the N-acetylmethionine mark. Transmembrane regions (helical) follow at residues 45 to 65 and 70 to 90; these read LIAEMIGTYFIVFSGCGVVVV and GGTITFPGICVTWGLIVMVMI. The short motif at 102 to 104 is the NPA 1 element; that stretch reads NPA. The next 3 membrane-spanning stretches (helical) occupy residues 122-142, 161-181, and 189-209; these read LYIGAQFAGSLLASLTLRLMF, ALVAEIIISFLLMFVISGVAT, and LAGIAVGMTIMVNVFVAGPIS. An NPA 2 motif is present at residues 214–216; the sequence is NPA. The helical transmembrane segment at 231–251 threads the bilayer; sequence IWVYIVGPVLGVISGGFVYNL. Ser267 bears the Phosphoserine mark.

It belongs to the MIP/aquaporin (TC 1.A.8) family. NIP (TC 1.A.8.12) subfamily.

Its subcellular location is the membrane. Functionally, potential aquaporin, which may facilitate the transport of water and small neutral solutes across cell membranes. This Arabidopsis thaliana (Mouse-ear cress) protein is Putative aquaporin NIP4-1 (NIP4-1).